The chain runs to 193 residues: Holliday junction branch migration complex subunit RuvA (193 aa).

The segment at Met1–Gly64 is domain I. Positions Thr65–Pro143 are domain II. Residues Ala144–Asp151 are flexible linker. The segment at Asp151–Gly193 is domain III.

Belongs to the RuvA family. Homotetramer. Forms an RuvA(8)-RuvB(12)-Holliday junction (HJ) complex. HJ DNA is sandwiched between 2 RuvA tetramers; dsDNA enters through RuvA and exits via RuvB. An RuvB hexamer assembles on each DNA strand where it exits the tetramer. Each RuvB hexamer is contacted by two RuvA subunits (via domain III) on 2 adjacent RuvB subunits; this complex drives branch migration. In the full resolvosome a probable DNA-RuvA(4)-RuvB(12)-RuvC(2) complex forms which resolves the HJ.

It is found in the cytoplasm. Its function is as follows. The RuvA-RuvB-RuvC complex processes Holliday junction (HJ) DNA during genetic recombination and DNA repair, while the RuvA-RuvB complex plays an important role in the rescue of blocked DNA replication forks via replication fork reversal (RFR). RuvA specifically binds to HJ cruciform DNA, conferring on it an open structure. The RuvB hexamer acts as an ATP-dependent pump, pulling dsDNA into and through the RuvAB complex. HJ branch migration allows RuvC to scan DNA until it finds its consensus sequence, where it cleaves and resolves the cruciform DNA. The sequence is that of Holliday junction branch migration complex subunit RuvA from Ralstonia nicotianae (strain ATCC BAA-1114 / GMI1000) (Ralstonia solanacearum).